Reading from the N-terminus, the 292-residue chain is Outer membrane protein assembly factor BamD (292 aa).

Residues 1–26 form the signal peptide; it reads MIQRPTFFTPTHLLAMLLATFVLITG. C27 carries the N-palmitoyl cysteine lipid modification. C27 carries the S-diacylglycerol cysteine lipid modification.

The protein belongs to the BamD family. Part of the Bam complex.

The protein resides in the cell outer membrane. Part of the outer membrane protein assembly complex, which is involved in assembly and insertion of beta-barrel proteins into the outer membrane. This chain is Outer membrane protein assembly factor BamD, found in Xylella fastidiosa (strain 9a5c).